The sequence spans 480 residues: Adenylosuccinate lyase (480 aa).

5 residues coordinate AMP: arginine 14, tyrosine 15, arginine 79, histidine 80, and aspartate 81. Histidine 80 contacts fumarate. Histidine 153 (proton donor/acceptor) is an active-site residue. Glutamine 236 contacts AMP. Glutamine 236 contributes to the fumarate binding site. Residue glutamine 236 coordinates N(6)-(1,2-dicarboxyethyl)-AMP. Serine 284 functions as the Proton donor/acceptor in the catalytic mechanism. The fumarate site is built by serine 285, lysine 290, and asparagine 292. Serine 285, lysine 290, and asparagine 292 together coordinate N(6)-(1,2-dicarboxyethyl)-AMP. AMP is bound at residue arginine 298. N(6)-(1,2-dicarboxyethyl)-AMP is bound by residues arginine 324, serine 329, and arginine 333. Residues serine 329 and arginine 333 each coordinate AMP.

The protein belongs to the lyase 1 family. Adenylosuccinate lyase subfamily. As to quaternary structure, homotetramer.

It carries out the reaction N(6)-(1,2-dicarboxyethyl)-AMP = fumarate + AMP. Its pathway is purine metabolism; AMP biosynthesis via salvage pathway. Its function is as follows. Catalyzes conversion of succinyladenosine monophosphate (SAMP) to AMP and fumarate on the purine salvage pathway. In Schistosoma mansoni (Blood fluke), this protein is Adenylosuccinate lyase.